Reading from the N-terminus, the 545-residue chain is Chromosomal replication initiator protein DnaA (545 aa).

Positions 1–72 (MNDFWQHCSA…DMARDFWQAP (72 aa)) are domain I, interacts with DnaA modulators. A domain II region spans residues 72–208 (PVDVQFVLDP…GETDSMYERS (137 aa)). Low complexity predominate over residues 90 to 105 (AAAPAPASARPASAPG). Disordered regions lie at residues 90-112 (AAAP…GSAG) and 181-204 (AAAR…TDSM). The segment covering 189-201 (PGQSASSNGNGET) has biased composition (polar residues). The domain III, AAA+ region stretch occupies residues 209 to 425 (KLNPVLTFDN…GALRKILAYS (217 aa)). ATP-binding residues include Gly253, Gly255, Lys256, and Thr257. The segment at 426-545 (KFHGREITIE…LHVLEQTLKG (120 aa)) is domain IV, binds dsDNA.

This sequence belongs to the DnaA family. In terms of assembly, oligomerizes as a right-handed, spiral filament on DNA at oriC.

It localises to the cytoplasm. Its function is as follows. Plays an essential role in the initiation and regulation of chromosomal replication. ATP-DnaA binds to the origin of replication (oriC) to initiate formation of the DNA replication initiation complex once per cell cycle. Binds the DnaA box (a 9 base pair repeat at the origin) and separates the double-stranded (ds)DNA. Forms a right-handed helical filament on oriC DNA; dsDNA binds to the exterior of the filament while single-stranded (ss)DNA is stabiized in the filament's interior. The ATP-DnaA-oriC complex binds and stabilizes one strand of the AT-rich DNA unwinding element (DUE), permitting loading of DNA polymerase. After initiation quickly degrades to an ADP-DnaA complex that is not apt for DNA replication. Binds acidic phospholipids. The chain is Chromosomal replication initiator protein DnaA from Paraburkholderia phytofirmans (strain DSM 17436 / LMG 22146 / PsJN) (Burkholderia phytofirmans).